The primary structure comprises 99 residues: uncharacterized protein (99 aa).

The N-terminal stretch at 1–17 (MMMNSFFPAMALMVLVG) is a signal peptide. The N-palmitoyl cysteine moiety is linked to residue Cys-18. Residue Cys-18 is the site of S-diacylglycerol cysteine attachment.

Its subcellular location is the cell membrane. This is an uncharacterized protein from Escherichia coli O157:H7.